Consider the following 368-residue polypeptide: Quinolinate synthase (368 aa).

Residues His-46 and Ser-63 each coordinate iminosuccinate. Cys-110 contacts [4Fe-4S] cluster. Residues 141 to 143 (YVN) and Ser-162 each bind iminosuccinate. Cys-230 serves as a coordination point for [4Fe-4S] cluster. Iminosuccinate-binding positions include 256–258 (HPE) and Thr-273. Cys-320 contributes to the [4Fe-4S] cluster binding site.

This sequence belongs to the quinolinate synthase family. Type 3 subfamily. [4Fe-4S] cluster is required as a cofactor.

It localises to the cytoplasm. The enzyme catalyses iminosuccinate + dihydroxyacetone phosphate = quinolinate + phosphate + 2 H2O + H(+). Its pathway is cofactor biosynthesis; NAD(+) biosynthesis; quinolinate from iminoaspartate: step 1/1. Its function is as follows. Catalyzes the condensation of iminoaspartate with dihydroxyacetone phosphate to form quinolinate. The chain is Quinolinate synthase from Bacillus cytotoxicus (strain DSM 22905 / CIP 110041 / 391-98 / NVH 391-98).